The following is a 534-amino-acid chain: uncharacterized protein (534 aa).

Helical transmembrane passes span 149 to 169 (ILTT…SITI) and 185 to 205 (VFLV…SLIF).

The protein resides in the cell membrane. This is an uncharacterized protein from Mycoplasma pneumoniae (strain ATCC 29342 / M129 / Subtype 1) (Mycoplasmoides pneumoniae).